A 270-amino-acid chain; its full sequence is Transmembrane protein 176B (270 aa).

The next 4 membrane-spanning stretches (helical) occupy residues 65–85 (LALG…GVCL), 95–115 (ASGC…GAIV), 127–147 (VSSL…VLCV), and 209–229 (LFLA…GVGL). Ser236, Ser245, Ser254, and Ser258 each carry phosphoserine. The interval 237 to 270 (SQPLNEEGSEKRLLGENSVPPSPSREQTSTAIVL) is disordered. Over residues 260–270 (SREQTSTAIVL) the composition is skewed to polar residues.

It belongs to the TMEM176 family.

It is found in the nucleus membrane. May play a role in the process of maturation of dendritic cells. Required for the development of cerebellar granule cells. This Pongo abelii (Sumatran orangutan) protein is Transmembrane protein 176B (TMEM176B).